Reading from the N-terminus, the 281-residue chain is Glutamate racemase (281 aa).

Residues 10–11 (DS) and 42–43 (YG) each bind substrate. Cys74 serves as the catalytic Proton donor/acceptor. 75-76 (NT) is a substrate binding site. Residue Cys190 is the Proton donor/acceptor of the active site. A substrate-binding site is contributed by 191-192 (TH).

This sequence belongs to the aspartate/glutamate racemases family.

It catalyses the reaction L-glutamate = D-glutamate. It participates in cell wall biogenesis; peptidoglycan biosynthesis. In terms of biological role, provides the (R)-glutamate required for cell wall biosynthesis. This is Glutamate racemase from Oenococcus oeni (strain ATCC BAA-331 / PSU-1).